Here is a 363-residue protein sequence, read N- to C-terminus: tRNA-specific 2-thiouridylase MnmA (363 aa).

ATP-binding positions include glycine 13 to serine 20 and methionine 39. The segment at asparagine 99 to aspartate 101 is interaction with target base in tRNA. Residue cysteine 104 is the Nucleophile of the active site. Cysteine 104 and cysteine 200 are oxidised to a cystine. An ATP-binding site is contributed by glycine 128. The interaction with tRNA stretch occupies residues lysine 150 to glutamine 152. Cysteine 200 functions as the Cysteine persulfide intermediate in the catalytic mechanism. An interaction with tRNA region spans residues arginine 310 to tyrosine 311.

The protein belongs to the MnmA/TRMU family.

The protein resides in the cytoplasm. It carries out the reaction S-sulfanyl-L-cysteinyl-[protein] + uridine(34) in tRNA + AH2 + ATP = 2-thiouridine(34) in tRNA + L-cysteinyl-[protein] + A + AMP + diphosphate + H(+). Its function is as follows. Catalyzes the 2-thiolation of uridine at the wobble position (U34) of tRNA, leading to the formation of s(2)U34. The polypeptide is tRNA-specific 2-thiouridylase MnmA (Ruthia magnifica subsp. Calyptogena magnifica).